Consider the following 158-residue polypeptide: Transcription elongation factor GreA (158 aa).

This sequence belongs to the GreA/GreB family.

Functionally, necessary for efficient RNA polymerase transcription elongation past template-encoded arresting sites. The arresting sites in DNA have the property of trapping a certain fraction of elongating RNA polymerases that pass through, resulting in locked ternary complexes. Cleavage of the nascent transcript by cleavage factors such as GreA or GreB allows the resumption of elongation from the new 3'terminus. GreA releases sequences of 2 to 3 nucleotides. This is Transcription elongation factor GreA from Acinetobacter baumannii (strain SDF).